Reading from the N-terminus, the 472-residue chain is Adenosylhomocysteinase (472 aa).

Substrate is bound by residues T64, D138, and E198. 199–201 (TTT) serves as a coordination point for NAD(+). Substrate contacts are provided by K228 and D232. Residues N233, 262-267 (GFGDVG), E285, N320, 341-343 (IGH), and N386 each bind NAD(+).

Belongs to the adenosylhomocysteinase family. Requires NAD(+) as cofactor.

Its subcellular location is the cytoplasm. It carries out the reaction S-adenosyl-L-homocysteine + H2O = L-homocysteine + adenosine. It participates in amino-acid biosynthesis; L-homocysteine biosynthesis; L-homocysteine from S-adenosyl-L-homocysteine: step 1/1. Its function is as follows. May play a key role in the regulation of the intracellular concentration of adenosylhomocysteine. This is Adenosylhomocysteinase from Prochlorococcus marinus (strain MIT 9215).